The following is a 199-amino-acid chain: MANETLRLALQPREITGKKVQSLRDQGILPIGICGRGIEPYSAQVDEREFNKVINQAGYSGLIELSIPGQKRQVAFLLEVQRNSVTNRIIHADLRVVDANAPVELDIHVALQGENDMVSRGNAVLNLVQSVIRVRALPGDVPHQIDIDASSLTEIGQQILVKDLSLPATVEILDDVETLILTLGYPQAEEAPAAETAAE.

Belongs to the bacterial ribosomal protein bL25 family. CTC subfamily. Part of the 50S ribosomal subunit; part of the 5S rRNA/L5/L18/L25 subcomplex. Contacts the 5S rRNA. Binds to the 5S rRNA independently of L5 and L18.

In terms of biological role, this is one of the proteins that binds to the 5S RNA in the ribosome where it forms part of the central protuberance. This Herpetosiphon aurantiacus (strain ATCC 23779 / DSM 785 / 114-95) protein is Large ribosomal subunit protein bL25.